Here is a 674-residue protein sequence, read N- to C-terminus: Endopolyphosphatase (674 aa).

The Cytoplasmic portion of the chain corresponds to 1–21; it reads MVVVGKSEVRNVSMSRPKKKS. 2 consecutive propeptides (removed in mature form) follow at residues 1–83 and 385–674; these read MVVV…VIIK and EQST…YKDD. A Glycyl lysine isopeptide (Lys-Gly) (interchain with G-Cter in ubiquitin) cross-link involves residue K6. A helical; Signal-anchor for type II membrane protein transmembrane segment spans residues 22 to 42; sequence LIAILSTCVLFFLVFIIGAKF. Topologically, residues 43-674 are vacuolar; sequence QYVSVFSKFL…SFASSGYKDD (632 aa). A glycan (N-linked (GlcNAc...) asparagine) is linked at N58. Residues 384 to 403 form a disordered region; the sequence is MEQSTRVQQGEDSNEEDEET. N-linked (GlcNAc...) asparagine glycans are attached at residues N505 and N511.

It belongs to the endopolyphosphatase PPN1 family. As to quaternary structure, homotetramer. Interacts with PPN2. The cofactor is Mn(2+). Mg(2+) is required as a cofactor. It depends on Co(2+) as a cofactor. Requires Zn(2+) as cofactor. Post-translationally, processing by proteases in the vacuole is required for activation. In terms of processing, ubiquitinated. Ubiquitination mediates sorting into internal vesicles in late endosomes. TUL1 and RSP5 are required for ubiquitination. Other cytoplasmic Lys residues than Lys-6 may also be ubiquitinated. N-glycosylated. N-glycosylation is essential for the protease-mediated maturation.

It is found in the vacuole membrane. The protein resides in the cytoplasm. The enzyme catalyses [phosphate](n+1) + n H2O = (n+1) phosphate + n H(+). It catalyses the reaction [phosphate](n) + H2O = [phosphate](n-1) + phosphate + H(+). The catalysed reaction is dATP + H2O = dADP + phosphate + H(+). With respect to regulation, inhibited by heparin and EDTA. In terms of biological role, catalyzes the hydrolysis of inorganic polyphosphate (polyP) chains of many hundreds of phosphate residues into shorter lengths. Has both exopolyphosphatase and endopolyphosphatase activities at different ratios depending on divalent cations by cleaving phosphate from the chain end and by fragmenting long-chain polymers into shorter ones, respectively. The limited digestion products are 1 and 3 P(i) residues. Also releases phosphate from dATP. dATP phosphohydrolase activity is about 7-fold lower than the exopolyphosphatase activity. This is Endopolyphosphatase from Saccharomyces cerevisiae (strain ATCC 204508 / S288c) (Baker's yeast).